The primary structure comprises 333 residues: Tetraacyldisaccharide 4'-kinase (333 aa).

60–67 is an ATP binding site; the sequence is TVGGTGKT.

Belongs to the LpxK family.

The catalysed reaction is a lipid A disaccharide + ATP = a lipid IVA + ADP + H(+). The protein operates within glycolipid biosynthesis; lipid IV(A) biosynthesis; lipid IV(A) from (3R)-3-hydroxytetradecanoyl-[acyl-carrier-protein] and UDP-N-acetyl-alpha-D-glucosamine: step 6/6. Functionally, transfers the gamma-phosphate of ATP to the 4'-position of a tetraacyldisaccharide 1-phosphate intermediate (termed DS-1-P) to form tetraacyldisaccharide 1,4'-bis-phosphate (lipid IVA). In Pseudomonas putida (strain ATCC 700007 / DSM 6899 / JCM 31910 / BCRC 17059 / LMG 24140 / F1), this protein is Tetraacyldisaccharide 4'-kinase.